The chain runs to 366 residues: ERCC4 domain-containing protein EP364R (366 aa).

Residues F3 to A101 form the ERCC4 domain.

This sequence belongs to the asfivirus EP364R family.

Functionally, plays a role in the inhibition of type I interferon signaling pathway. Mechanistically, specifically interacts with 2',3'-cGAMP and cleaves it via its phosphodiesterase activity. In turn, prevents 2',3'-cGAMP interaction with host ER-resident STING1 leading to inhibition of downstream signaling pathway and type I interferon production. The chain is ERCC4 domain-containing protein EP364R from African swine fever virus (isolate Pig/Kenya/KEN-50/1950) (ASFV).